A 351-amino-acid chain; its full sequence is (S)-coclaurine N-methyltransferase (351 aa).

S-adenosyl-L-methionine-binding positions include 91–92 (QS), 126–134 (VLDLGCGLG), 130–132 (GCG), and 153–158 (TSSVEQ). Residue cysteine 326 is part of the active site.

The protein belongs to the CFA/CMAS family. As to expression, expressed in roots, stems, flower buds and at lower levels, in leaves. Restricted to sieve elements of the phloem adjacent or proximal to laticifers.

Its subcellular location is the cytoplasm. The catalysed reaction is (S)-coclaurine + S-adenosyl-L-methionine = (S)-N-methylcoclaurine + S-adenosyl-L-homocysteine + H(+). It participates in alkaloid biosynthesis; (S)-reticuline biosynthesis; (S)-reticuline from (S)-norcoclaurine: step 2/4. In terms of biological role, involved in the biosynthesis of benzylisoquinoline alkaloids. N-methyltransferase methylating (S)-coclaurine. 4'-O-methylcoclaurine and norlaudanine can also be used as substrates. This is (S)-coclaurine N-methyltransferase from Papaver somniferum (Opium poppy).